A 457-amino-acid polypeptide reads, in one-letter code: Siroheme synthase (457 aa).

Residues 1–204 are precorrin-2 dehydrogenase /sirohydrochlorin ferrochelatase; that stretch reads MDHLPIFCQL…ADEKAVNATT (204 aa). NAD(+) is bound by residues 22-23 and 43-44; these read DV and LT. A Phosphoserine modification is found at Ser128. A uroporphyrinogen-III C-methyltransferase region spans residues 216-457; sequence GEVVLVGAGP…RDKLNWFSNH (242 aa). Pro225 is an S-adenosyl-L-methionine binding site. Asp248 functions as the Proton acceptor in the catalytic mechanism. Residue Lys270 is the Proton donor of the active site. Residues 301–303, Ile306, 331–332, Met382, and Gly411 each bind S-adenosyl-L-methionine; these read GGD and TA.

This sequence in the N-terminal section; belongs to the precorrin-2 dehydrogenase / sirohydrochlorin ferrochelatase family. In the C-terminal section; belongs to the precorrin methyltransferase family.

It carries out the reaction uroporphyrinogen III + 2 S-adenosyl-L-methionine = precorrin-2 + 2 S-adenosyl-L-homocysteine + H(+). It catalyses the reaction precorrin-2 + NAD(+) = sirohydrochlorin + NADH + 2 H(+). The catalysed reaction is siroheme + 2 H(+) = sirohydrochlorin + Fe(2+). Its pathway is cofactor biosynthesis; adenosylcobalamin biosynthesis; precorrin-2 from uroporphyrinogen III: step 1/1. The protein operates within cofactor biosynthesis; adenosylcobalamin biosynthesis; sirohydrochlorin from precorrin-2: step 1/1. It functions in the pathway porphyrin-containing compound metabolism; siroheme biosynthesis; precorrin-2 from uroporphyrinogen III: step 1/1. It participates in porphyrin-containing compound metabolism; siroheme biosynthesis; siroheme from sirohydrochlorin: step 1/1. Its pathway is porphyrin-containing compound metabolism; siroheme biosynthesis; sirohydrochlorin from precorrin-2: step 1/1. Its function is as follows. Multifunctional enzyme that catalyzes the SAM-dependent methylations of uroporphyrinogen III at position C-2 and C-7 to form precorrin-2 via precorrin-1. Then it catalyzes the NAD-dependent ring dehydrogenation of precorrin-2 to yield sirohydrochlorin. Finally, it catalyzes the ferrochelation of sirohydrochlorin to yield siroheme. This Salmonella typhi protein is Siroheme synthase.